The following is a 121-amino-acid chain: Cell division protein FtsL (121 aa).

Topologically, residues 1 to 34 (MISRVTEALSKVKGSIGSNERHALPGVIGDDLLR) are cytoplasmic. A helical membrane pass occupies residues 35–57 (FGKLPLCLFICIILTAVTVVTTA). The Periplasmic portion of the chain corresponds to 58–121 (HHTRLLTAQR…PSQENIVVQK (64 aa)).

The protein belongs to the FtsL family. Part of a complex composed of FtsB, FtsL and FtsQ.

It is found in the cell inner membrane. Essential cell division protein. May link together the upstream cell division proteins, which are predominantly cytoplasmic, with the downstream cell division proteins, which are predominantly periplasmic. This chain is Cell division protein FtsL, found in Salmonella typhimurium (strain LT2 / SGSC1412 / ATCC 700720).